The chain runs to 335 residues: 2-acylglycerol O-acyltransferase 1 (335 aa).

2 helical membrane passes run 24 to 44 (WLLSFLLFAQVCLGIIVFLII) and 104 to 124 (YIFGFHPHGVLVVGAFGNFCT). 2 N-linked (GlcNAc...) asparagine glycosylation sites follow: Asn-125 and Asn-180.

Belongs to the diacylglycerol acyltransferase family.

It localises to the endoplasmic reticulum membrane. The catalysed reaction is a 2-acylglycerol + an acyl-CoA = a 1,2-diacylglycerol + CoA. It carries out the reaction 2-(9Z-octadecenoyl)-glycerol + butanoyl-CoA = 1-butanoyl-2-(9Z-octadecenoyl)-glycerol + CoA. The enzyme catalyses 2-(9Z-octadecenoyl)-glycerol + octanoyl-CoA = 1-octanoyl-2-(9Z-octadecenoyl)-glycerol + CoA. It catalyses the reaction 2-(9Z-octadecenoyl)-glycerol + dodecanoyl-CoA = 1-dodecanoyl-2-(9Z-octadecenoyl)-glycerol + CoA. The catalysed reaction is 2-(9Z-octadecenoyl)-glycerol + tetradecanoyl-CoA = 1-tetradecanoyl-2-(9Z-octadecenoyl)-glycerol + CoA. It carries out the reaction 2-(9Z-octadecenoyl)-glycerol + hexadecanoyl-CoA = 1-hexadecanoyl-2-(9Z-octadecenoyl)-glycerol + CoA. The enzyme catalyses 2-(9Z-octadecenoyl)-glycerol + octadecanoyl-CoA = 1-octadecanoyl-2-(9Z-octadecenoyl)-glycerol + CoA. It catalyses the reaction eicosanoyl-CoA + 2-(9Z-octadecenoyl)-glycerol = 1-eicosanoyl-2-(9Z-octadecenoyl)-glycerol + CoA. The catalysed reaction is 2-(9Z-octadecenoyl)-glycerol + (9Z)-octadecenoyl-CoA = 1,2-di-(9Z-octadecenoyl)-glycerol + CoA. It carries out the reaction 2-(9Z-octadecenoyl)-glycerol + (9Z,12Z)-octadecadienoyl-CoA = 1-(9Z,12Z-octadecadienoyl)-2-(9Z-octadecenoyl)-glycerol + CoA. The enzyme catalyses 2-(9Z-octadecenoyl)-glycerol + (5Z,8Z,11Z,14Z)-eicosatetraenoyl-CoA = 1-(5Z,8Z,11Z,14Z-eicosatetraenoyl)-2-(9Z-octadecenoyl)-glycerol + CoA. It catalyses the reaction a 2-acylglycerol + an acyl-CoA = a 1,2-diacyl-sn-glycerol + CoA. The catalysed reaction is a 2-acylglycerol + an acyl-CoA = a 2,3-diacyl-sn-glycerol + CoA. It carries out the reaction a 1-acylglycerol + an acyl-CoA = a 1,2-diacylglycerol + CoA. The enzyme catalyses 1-dodecanoylglycerol + (9Z)-octadecenoyl-CoA = 1-dodecanoyl-2-(9Z-octadecenoyl)-glycerol + CoA. It catalyses the reaction 1-tetradecanoylglycerol + (9Z)-octadecenoyl-CoA = 1-tetradecanoyl-2-(9Z-octadecenoyl)-glycerol + CoA. The catalysed reaction is 1-hexadecanoylglycerol + (9Z)-octadecenoyl-CoA = 1-hexadecanoyl-2-(9Z-octadecenoyl)-glycerol + CoA. It carries out the reaction 1-(9Z-octadecenoyl)-glycerol + (9Z)-octadecenoyl-CoA = 1,2-di-(9Z-octadecenoyl)-glycerol + CoA. The enzyme catalyses 1-(9Z,12Z-octadecadienoyl)-glycerol + (9Z)-octadecenoyl-CoA = 1-(9Z,12Z-octadecadienoyl)-2-(9Z-octadecenoyl)-glycerol + CoA. It catalyses the reaction 1-(9Z,12Z,15Z-octadecatrienoyl)-glycerol + (9Z)-octadecenoyl-CoA = 1-(9Z,12Z,15Z-octadecatrienoyl)-2-(9Z-octadecenoyl)-glycerol + CoA. The catalysed reaction is 1-(5Z,8Z,11Z,14Z-eicosatetraenoyl)-glycerol + (9Z)-octadecenoyl-CoA = 1-(5Z,8Z,11Z,14Z-eicosatetraenoyl)-2-(9Z-octadecenoyl)-glycerol + CoA. It carries out the reaction a 1-acylglycerol + an acyl-CoA = a 1,3-diacylglycerol + CoA. The enzyme catalyses 1-dodecanoylglycerol + (9Z)-octadecenoyl-CoA = 1-dodecanoyl-3-(9Z-octadecenoyl)-glycerol + CoA. It catalyses the reaction 1-hexadecanoylglycerol + (9Z)-octadecenoyl-CoA = 1-(9Z-octadecenoyl)-3-hexadecanoylglycerol + CoA. The catalysed reaction is 1-octadecanoylglycerol + (9Z)-octadecenoyl-CoA = 1-octadecanoyl-3-(9Z-octadecenoyl)-glycerol + CoA. It carries out the reaction 1-(9Z-octadecenoyl)-sn-glycerol + (9Z)-octadecenoyl-CoA = 1,3-di-(9Z-octadecenoyl)-glycerol + CoA. The enzyme catalyses 1-(9Z,12Z-octadecadienoyl)-glycerol + (9Z)-octadecenoyl-CoA = 1-(9Z-octadecenoyl)-3-(9Z,12Z-octadecadienoyl)-glycerol + CoA. It catalyses the reaction 1-(9Z,12Z,15Z-octadecatrienoyl)-glycerol + (9Z)-octadecenoyl-CoA = 1-(9Z,12Z,15Z-octadecatrienoyl)-3-(9Z-octadecenoyl)-glycerol + CoA. The catalysed reaction is a 1-acyl-sn-glycerol + an acyl-CoA = a 1,3-diacyl-sn-glycerol + CoA. It carries out the reaction a 3-acyl-sn-glycerol + an acyl-CoA = a 1,3-diacyl-sn-glycerol + CoA. The enzyme catalyses 3-octadecanoyl-sn-glycerol + (9Z)-octadecenoyl-CoA = 1-(9Z-octadecenoyl)-3-octadecanoyl-sn-glycerol + CoA. It functions in the pathway glycerolipid metabolism; triacylglycerol biosynthesis. Functionally, involved in glycerolipid synthesis and lipid metabolism. Catalyzes the formation of diacylglycerol, the precursor of triacylglycerol, by transferring the acyl chain of a fatty acyl-CoA to a monoacylglycerol, mainly at the sn-1 or sn-3 positions. It uses both sn-2-monoacylglycerol (2-acylglycerol) and sn-1-monoacylglycerol (1-acyl-sn-glycerol) equally well as substrates, and uses sn-3-monoacylglycerol (3-acyl-sn-glycerol) with lower efficiency. Probably not involved in absorption of dietary fat in the small intestine. The sequence is that of 2-acylglycerol O-acyltransferase 1 (MOGAT1) from Bos taurus (Bovine).